A 299-amino-acid chain; its full sequence is Aspartate carbamoyltransferase catalytic subunit (299 aa).

2 residues coordinate carbamoyl phosphate: Arg-51 and Thr-52. Residue Lys-80 participates in L-aspartate binding. Arg-101, His-129, and Gln-132 together coordinate carbamoyl phosphate. Residues Arg-162 and Arg-221 each contribute to the L-aspartate site. The carbamoyl phosphate site is built by Leu-260 and Pro-261.

It belongs to the aspartate/ornithine carbamoyltransferase superfamily. ATCase family. As to quaternary structure, heterooligomer of catalytic and regulatory chains.

The catalysed reaction is carbamoyl phosphate + L-aspartate = N-carbamoyl-L-aspartate + phosphate + H(+). It functions in the pathway pyrimidine metabolism; UMP biosynthesis via de novo pathway; (S)-dihydroorotate from bicarbonate: step 2/3. Functionally, catalyzes the condensation of carbamoyl phosphate and aspartate to form carbamoyl aspartate and inorganic phosphate, the committed step in the de novo pyrimidine nucleotide biosynthesis pathway. This chain is Aspartate carbamoyltransferase catalytic subunit, found in Sulfolobus acidocaldarius (strain ATCC 33909 / DSM 639 / JCM 8929 / NBRC 15157 / NCIMB 11770).